The primary structure comprises 556 residues: Phenylalanine--tRNA ligase beta subunit (556 aa).

Residues 278 to 353 (LTPKEFEVEL…IAYGYNNIEP (76 aa)) form the B5 domain. D331, D337, E340, and D341 together coordinate Mg(2+).

Belongs to the phenylalanyl-tRNA synthetase beta subunit family. Type 2 subfamily. Tetramer of two alpha and two beta subunits. Mg(2+) serves as cofactor.

It localises to the cytoplasm. The enzyme catalyses tRNA(Phe) + L-phenylalanine + ATP = L-phenylalanyl-tRNA(Phe) + AMP + diphosphate + H(+). The chain is Phenylalanine--tRNA ligase beta subunit from Pyrococcus horikoshii (strain ATCC 700860 / DSM 12428 / JCM 9974 / NBRC 100139 / OT-3).